The following is a 614-amino-acid chain: DNA repair protein rad26 (614 aa).

Residues 29 to 43 (QAQTQVQAQSSQVVV) show a composition bias toward low complexity. Disordered stretches follow at residues 29–76 (QAQT…QASL) and 157–214 (KKMK…TAED). Composition is skewed to polar residues over residues 50–76 (QNLN…QASL) and 181–190 (LLSSSDQLAK). Residues 191–207 (STKHAAKNSPSKKKRKT) are compositionally biased toward basic residues.

Interacts with cds1.

Its subcellular location is the nucleus. Functionally, involved in cell cycle arrest when DNA synthesis is inhibited by hydroxyurea, and in mitosis arrest after treatment with DNA-damaging agents. This protein is S phase-specific. The chain is DNA repair protein rad26 (rad26) from Schizosaccharomyces pombe (strain 972 / ATCC 24843) (Fission yeast).